A 598-amino-acid chain; its full sequence is Vacuolin-A (598 aa).

Residues 482–539 adopt a coiled-coil conformation; it reads IKTTEARLKAETDNIALEQRNKAIISESQAKLSSAQREAESLLITAEAQKKASELQGE.

The protein belongs to the vacuolin family.

It is found in the endosome membrane. The protein localises to the lysosome. In Dictyostelium discoideum (Social amoeba), this protein is Vacuolin-A (vacA).